Reading from the N-terminus, the 136-residue chain is MALLRGFLVCSLLLLSCICKEALGTRLLGGLENASPEEPGVARALQFAMNEYNRGSNDMYSSRVSEVVEAQKQIVSGIKYYFTVKIGRTVCRKGATDLENCAFHNAPKLAQTMTCTFEVYNIPWRNFISLEKSSCT.

A signal peptide spans 1–24 (MALLRGFLVCSLLLLSCICKEALG). Positions 29 to 124 (GGLENASPEE…CTFEVYNIPW (96 aa)) constitute a Cystatin domain. A Secondary area of contact motif is present at residues 73-77 (QIVSG). 2 disulfide bridges follow: C91-C101 and C115-C135.

It belongs to the cystatin family. As to expression, expressed by the venom gland.

It is found in the secreted. Its function is as follows. Inhibits various C1 cysteine proteases including cathepsin L, papain and cathepsin B. This protein has no toxic activity and its function in the venom is unknown. It may play a role as housekeeping or regulatory protein. This Crotalus adamanteus (Eastern diamondback rattlesnake) protein is Cystatin-2.